Consider the following 108-residue polypeptide: uncharacterized protein (108 aa).

This is an uncharacterized protein from Acidianus sp. F28 (AFV-2).